Consider the following 432-residue polypeptide: Glutamate-1-semialdehyde 2,1-aminomutase 2 (432 aa).

Position 268 is an N6-(pyridoxal phosphate)lysine (Lys268).

Belongs to the class-III pyridoxal-phosphate-dependent aminotransferase family. HemL subfamily. Homodimer. The cofactor is pyridoxal 5'-phosphate.

It localises to the cytoplasm. The catalysed reaction is (S)-4-amino-5-oxopentanoate = 5-aminolevulinate. Its pathway is porphyrin-containing compound metabolism; protoporphyrin-IX biosynthesis; 5-aminolevulinate from L-glutamyl-tRNA(Glu): step 2/2. The protein is Glutamate-1-semialdehyde 2,1-aminomutase 2 of Listeria monocytogenes serotype 4b (strain CLIP80459).